The primary structure comprises 409 residues: SPI-1 type 3 secretion system translocon protein SctB (409 aa).

Residues 119 to 140 form a helical membrane-spanning segment; it reads ISGMSSSAVALLAAANTLMLTL.

Belongs to the SctB/SipC family. The core secretion machinery of the T3SS is composed of approximately 20 different proteins, including cytoplasmic components, a base, an export apparatus and a needle. This subunit is involved in the formation of a pore, called the translocon, in host membrane.

It is found in the secreted. It localises to the host membrane. In terms of biological role, component of the type III secretion system 1 (SPI-1 T3SS), also called injectisome, which is used to inject bacterial effector proteins into eukaryotic host cells. SipB/SctE1 and SipC/SctB1 are inserted into the host membrane where they form a pore and allow the translocation of effector proteins into the cytosol of target cells. The chain is SPI-1 type 3 secretion system translocon protein SctB from Salmonella typhimurium (strain 14028s / SGSC 2262).